A 276-amino-acid chain; its full sequence is Undecaprenyl-diphosphatase (276 aa).

Helical transmembrane passes span 84-104 (YRLGWYVIIGTIPICILGLFF), 115-135 (LWVVVTALVVFSGVIALAEYV), 188-208 (FGFLLAIPAVFASGLFSLPDA), 222-242 (QLLVATLIAFVLGLTAVAWLL), and 250-270 (MYWFVGYRVLVGTGMLVLLAT).

Belongs to the UppP family.

It localises to the cell membrane. It carries out the reaction di-trans,octa-cis-undecaprenyl diphosphate + H2O = di-trans,octa-cis-undecaprenyl phosphate + phosphate + H(+). Functionally, catalyzes the dephosphorylation of undecaprenyl diphosphate (UPP). Confers resistance to bacitracin. The chain is Undecaprenyl-diphosphatase from Mycobacterium bovis (strain ATCC BAA-935 / AF2122/97).